Here is a 193-residue protein sequence, read N- to C-terminus: Cysteine and glycine-rich protein 1 (193 aa).

Residues cysteine 10–cysteine 61 form the LIM zinc-binding 1 domain. The Nuclear localization signal motif lies at lysine 64–lysine 69. The residue at position 81 (serine 81) is a Phosphoserine. N6-acetyllysine is present on lysine 84. Lysine 91 participates in a covalent cross-link: Glycyl lysine isopeptide (Lys-Gly) (interchain with G-Cter in SUMO2). Lysine 112, lysine 131, lysine 137, and lysine 161 each carry N6-acetyllysine. The region spanning cysteine 119 to cysteine 170 is the LIM zinc-binding 2 domain. Serine 192 is modified (phosphoserine).

In terms of assembly, interacts with ASCC1; ASCC2 and TRIP4.

It is found in the nucleus. In terms of biological role, could play a role in neuronal development. The chain is Cysteine and glycine-rich protein 1 (CSRP1) from Homo sapiens (Human).